Here is a 256-residue protein sequence, read N- to C-terminus: Alcohol dehydrogenase (256 aa).

Residue 12–35 (FVAGLGGIGLDTSKELVKRDLKNL) coordinates NAD(+). S140 contributes to the substrate binding site. Residue Y153 is the Proton acceptor of the active site.

Belongs to the short-chain dehydrogenases/reductases (SDR) family. As to quaternary structure, homodimer.

It carries out the reaction a primary alcohol + NAD(+) = an aldehyde + NADH + H(+). The enzyme catalyses a secondary alcohol + NAD(+) = a ketone + NADH + H(+). This is Alcohol dehydrogenase (Adh) from Drosophila orena (Fruit fly).